A 1203-amino-acid chain; its full sequence is Regulator of telomere elongation helicase 1 (1203 aa).

Residues N7–Q296 form the Helicase ATP-binding domain. Position 42 to 49 (S42 to T49) interacts with ATP. Residues C145, C163, C172, and C207 each contribute to the [4Fe-4S] cluster site. A Nuclear localization signal motif is present at residues K151–V167. Residues D250 to H253 carry the DEAH box motif. Positions Q871 to K877 match the Nuclear localization signal motif. Disordered regions lie at residues Q998 to G1020 and T1120 to Q1203. Polar residues predominate over residues H1004 to G1020. Residues K1123 to S1134 are compositionally biased toward basic and acidic residues. Positions Q1160–F1167 match the PIP-box motif. Residues Q1169–T1181 show a composition bias toward basic and acidic residues.

It belongs to the helicase family. RAD3/XPD subfamily. In terms of assembly, interacts with TERF1. Interacts (via PIP-box) with PCNA; the interaction is direct and essential for suppressing telomere fragility. Interacts with MMS19; the interaction mediates the association of RTEL1 with the cytosolic iron-sulfur protein assembly (CIA) complex. Widely expressed. Expressed in spleen, thymus, Peyer patches, kidney, and intestine. Not expressed in brain, heart, lung, skeletal muscles, skin and white fat. In the adult gonad, it is highly expressed in the testis, mainly in the spermatogonia and meiotic spermatocytes.

The protein resides in the nucleus. The enzyme catalyses ATP + H2O = ADP + phosphate + H(+). Functionally, a probable ATP-dependent DNA helicase implicated in telomere-length regulation, DNA repair and the maintenance of genomic stability. Acts as an anti-recombinase to counteract toxic recombination and limit crossover during meiosis. Regulates meiotic recombination and crossover homeostasis by physically dissociating strand invasion events and thereby promotes noncrossover repair by meiotic synthesis dependent strand annealing (SDSA) as well as disassembly of D loop recombination intermediates. Also disassembles T loops and prevents telomere fragility by counteracting telomeric G4-DNA structures, which together ensure the dynamics and stability of the telomere. The polypeptide is Regulator of telomere elongation helicase 1 (Mus musculus (Mouse)).